The chain runs to 205 residues: Small ribosomal subunit protein uS4 (205 aa).

Residues 26-46 (PVNRREYGPGQHGQRRKQKPS) form a disordered region. An S4 RNA-binding domain is found at 94-157 (RRLDAVVYRL…KQLAIVLDAV (64 aa)).

It belongs to the universal ribosomal protein uS4 family. Part of the 30S ribosomal subunit. Contacts protein S5. The interaction surface between S4 and S5 is involved in control of translational fidelity.

Its function is as follows. One of the primary rRNA binding proteins, it binds directly to 16S rRNA where it nucleates assembly of the body of the 30S subunit. In terms of biological role, with S5 and S12 plays an important role in translational accuracy. The chain is Small ribosomal subunit protein uS4 from Gluconobacter oxydans (strain 621H) (Gluconobacter suboxydans).